The primary structure comprises 440 residues: Transposon Ty1-GR2 Gag polyprotein (440 aa).

Residues 1–16 show a composition bias toward low complexity; that stretch reads MESQQLSQHSHISHGS. 3 disordered regions span residues 1–93, 126–173, and 352–440; these read MESQ…MMTQ, PQSQ…RPPP, and GSRN…PGTY. Composition is skewed to polar residues over residues 48-60 and 127-152; these read TKANSQQTTTPAS and QSQFPQYPSSVGTPLSTPSPESGNTF. Over residues 153-165 the composition is skewed to low complexity; sequence TDSSSADSDMTST. Positions 299-401 are RNA-binding; that stretch reads NNGIHINNKV…NSKSKTARAH (103 aa). The span at 402 to 418 shows a compositional bias: low complexity; it reads NVSTSNNSPSTDNDSIS. The residue at position 416 (Ser-416) is a Phosphoserine. Positions 419–428 are enriched in polar residues; the sequence is KSTTEPIQLN. Over residues 429 to 440 the composition is skewed to basic and acidic residues; that stretch reads NKHDLHLRPGTY.

Homotrimer.

It is found in the cytoplasm. In terms of biological role, capsid protein (CA) is the structural component of the virus-like particle (VLP), forming the shell that encapsulates the retrotransposons dimeric RNA genome. The particles are assembled from trimer-clustered units and there are holes in the capsid shells that allow for the diffusion of macromolecules. CA also has nucleocapsid-like chaperone activity, promoting primer tRNA(i)-Met annealing to the multipartite primer-binding site (PBS), dimerization of Ty1 RNA and initiation of reverse transcription. The chain is Transposon Ty1-GR2 Gag polyprotein (TY1A-GR2) from Saccharomyces cerevisiae (strain ATCC 204508 / S288c) (Baker's yeast).